A 261-amino-acid chain; its full sequence is MPSMTSKVFAITGGASGIGAATCRLLAERDAAVICLADVSSTNFTSLQESIAKSNPSTLVHCTELDVRSADKVDQWLQSIVSTHGDLHGAANVAGIAQGAGLRATPTILEENDAEWSRILDVNLNGVFYSTRAQVRVMKDLPPGHRSIVNVASIAAFSHVPDVYAYGTSKSACAYLTTCIAADVFWSGIRVNCVSPGITNTPMLPQFEPKAKSLDAIKDMYRDQGYPTGEADGVARTIVWLLSEDSIPVYGANINVGACPP.

Residues 1-20 form the signal peptide; sequence MPSMTSKVFAITGGASGIGA. Isoleucine 18 is an NADP(+) binding site. A glycan (N-linked (GlcNAc...) asparagine) is linked at asparagine 43. 5 residues coordinate NADP(+): aspartate 66, arginine 132, tyrosine 166, lysine 170, and threonine 201. Tyrosine 166 serves as the catalytic Proton donor. Lysine 170 functions as the Lowers pKa of active site Tyr in the catalytic mechanism.

It belongs to the short-chain dehydrogenases/reductases (SDR) family. As to quaternary structure, homotetramer.

It catalyses the reaction chanoclavine-I + NAD(+) = chanoclavine-I aldehyde + NADH + H(+). It participates in alkaloid biosynthesis; ergot alkaloid biosynthesis. Chanoclavine-I dehydrogenase; part of the gene cluster that mediates the biosynthesis of fungal ergot alkaloid. DmaW catalyzes the first step of ergot alkaloid biosynthesis by condensing dimethylallyl diphosphate (DMAP) and tryptophan to form 4-dimethylallyl-L-tryptophan. The second step is catalyzed by the methyltransferase easF that methylates 4-dimethylallyl-L-tryptophan in the presence of S-adenosyl-L-methionine, resulting in the formation of 4-dimethylallyl-L-abrine. The catalase easC and the FAD-dependent oxidoreductase easE then transform 4-dimethylallyl-L-abrine to chanoclavine-I which is further oxidized by easD in the presence of NAD(+), resulting in the formation of chanoclavine-I aldehyde. Agroclavine dehydrogenase easG then mediates the conversion of chanoclavine-I aldehyde to agroclavine via a non-enzymatic adduct reaction: the substrate is an iminium intermediate that is formed spontaneously from chanoclavine-I aldehyde in the presence of glutathione. The presence of easA is not required to complete this reaction. Further conversion of agroclavine to paspalic acid is a two-step process involving oxidation of agroclavine to elymoclavine and of elymoclavine to paspalic acid, the second step being performed by the elymoclavine oxidase cloA. Paspalic acid is then further converted to D-lysergic acid. Ergopeptines are assembled from D-lysergic acid and three different amino acids by the D-lysergyl-peptide-synthetases composed each of a monomudular and a trimodular nonribosomal peptide synthetase subunit. LpsB and lpsC encode the monomodular subunits responsible for D-lysergic acid activation and incorporation into the ergopeptine backbone. LpsA1 and A2 subunits encode the trimodular nonribosomal peptide synthetase assembling the tripeptide portion of ergopeptines. LpsA1 is responsible for formation of the major ergopeptine, ergotamine, and lpsA2 for alpha-ergocryptine, the minor ergopeptine of the total alkaloid mixture elaborated by C.purpurea. D-lysergyl-tripeptides are assembled by the nonribosomal peptide synthetases and released as N-(D-lysergyl-aminoacyl)-lactams. Cyclolization of the D-lysergyl-tripeptides is performed by the Fe(2+)/2-ketoglutarate-dependent dioxygenase easH which introduces a hydroxyl group into N-(D-lysergyl-aminoacyl)-lactam at alpha-C of the aminoacyl residue followed by spontaneous condensation with the terminal lactam carbonyl group. This Claviceps purpurea (Ergot fungus) protein is Chanoclavine-I dehydrogenase easD.